Consider the following 823-residue polypeptide: Protein FAM193B (823 aa).

Disordered stretches follow at residues 1–78 (MTRR…TSQS), 158–191 (SCKSQSCGGDSHSSSSSSSSSSSSSSSCHGNSGD), 209–281 (SPHS…PTTP), and 381–409 (CEADEGLGEEEDSSSERSSCTSSSTHQRD). Pro residues predominate over residues 26–36 (PQAPEPPPPPS). Over residues 52–64 (PYRDDPREEDEPK) the composition is skewed to basic and acidic residues. Composition is skewed to low complexity over residues 168–184 (SHSSSSSSSSSSSSSSS) and 263–281 (SHPGSFGSPPHPHLLPTTP). Acidic residues predominate over residues 382–393 (EADEGLGEEEDS). Residues 422–484 (GHNAEKEKAQ…RLQEIKNTVK (63 aa)) are a coiled coil. 2 disordered regions span residues 503 to 583 (FSKE…PENG) and 599 to 775 (WVKT…PKDM). Composition is skewed to polar residues over residues 516–526 (LAPSNPSGSSE) and 641–657 (QGNQAKKSEVSPASQSP). Residues Ser-694, Ser-706, and Ser-813 each carry the phosphoserine modification.

It belongs to the FAM193 family.

Its subcellular location is the cytoplasm. It is found in the nucleus. The polypeptide is Protein FAM193B (FAM193B) (Bos taurus (Bovine)).